A 294-amino-acid polypeptide reads, in one-letter code: Nucleotide-binding protein Adeh_0147 (294 aa).

G17–S24 contacts ATP. Residue D68 to E71 coordinates GTP.

It belongs to the RapZ-like family.

Functionally, displays ATPase and GTPase activities. The protein is Nucleotide-binding protein Adeh_0147 of Anaeromyxobacter dehalogenans (strain 2CP-C).